Reading from the N-terminus, the 112-residue chain is Large ribosomal subunit protein bL20c (112 aa).

Belongs to the bacterial ribosomal protein bL20 family.

It is found in the plastid. Its subcellular location is the chloroplast. Binds directly to 23S ribosomal RNA and is necessary for the in vitro assembly process of the 50S ribosomal subunit. It is not involved in the protein synthesizing functions of that subunit. The chain is Large ribosomal subunit protein bL20c (rpl20) from Anthoceros angustus (Hornwort).